We begin with the raw amino-acid sequence, 73 residues long: UPF0154 protein BcerKBAB4_3367 (73 aa).

The chain crosses the membrane as a helical span at residues 4–24 (WLGILVGVVALVAGVALGFFI).

Belongs to the UPF0154 family.

It localises to the cell membrane. The sequence is that of UPF0154 protein BcerKBAB4_3367 from Bacillus mycoides (strain KBAB4) (Bacillus weihenstephanensis).